The primary structure comprises 269 residues: Zinc finger protein SNAI2 (269 aa).

An SNAG domain region spans residues 1–20; it reads MPRSFLVKKHFNASKKPNYS. The tract at residues 81–117 is disordered; it reads SSSLGRVSPPPSSDTSSKDHSGSESPISDEEERLQPK. 4 C2H2-type zinc fingers span residues 129–151, 160–182, 186–208, and 214–236; these read FQCNLCNKTYSTFSGLAKHKQLH, FSCKYCDKEYVSLGALKMHIRTH, CVCKICGKAFSRPWLLQGHIRTH, and FSCPHCNRAFADRSNLRAHLQTH. The C2H2-type 5; atypical zinc-finger motif lies at 242-265; sequence YQCKNCSKTFSRMSLLHKHEESGC.

The protein belongs to the snail C2H2-type zinc-finger protein family. Interacts (via SNAG domain) with LIMD1 (via LIM domains), WTIP (via LIM domains) and AJUBA (via LIM domains). Interacts (via zinc fingers) with KPNA2, KPNB1, and TNPO1. May interact (via zinc fingers) with IPO7. In terms of processing, phosphorylated by GSK3B. Once phosphorylated, it becomes a target for ubiquitination. Post-translationally, ubiquitinated by the SCF(FBXO11) complex; ubiquitination requires previous GSK3B-mediated SNAI2 phosphorylation.

Its subcellular location is the nucleus. The protein resides in the cytoplasm. Functionally, transcriptional repressor that modulates both activator-dependent and basal transcription. Involved in the generation and migration of neural crest cells. Plays a role in mediating RAF1-induced transcriptional repression of the TJ protein, occludin (OCLN) and subsequent oncogenic transformation of epithelial cells. Represses BRCA2 expression by binding to its E2-box-containing silencer and recruiting CTBP1 and HDAC1 in breast cells. In epidermal keratinocytes, binds to the E-box in ITGA3 promoter and represses its transcription. Involved in the regulation of ITGB1 and ITGB4 expression and cell adhesion and proliferation in epidermal keratinocytes. Binds to E-box2 domain of BSG and activates its expression during TGFB1-induced epithelial-mesenchymal transition (EMT) in hepatocytes. Represses E-Cadherin/CDH1 transcription via E-box elements. Involved in osteoblast maturation. Binds to RUNX2 and SOC9 promoters and may act as a positive and negative transcription regulator, respectively, in osteoblasts. Binds to CXCL12 promoter via E-box regions in mesenchymal stem cells and osteoblasts. Plays an essential role in TWIST1-induced EMT and its ability to promote invasion and metastasis. The protein is Zinc finger protein SNAI2 (Snai2) of Mus musculus (Mouse).